A 1212-amino-acid chain; its full sequence is uncharacterized protein (1212 aa).

A disordered region spans residues Thr-783–Gln-802.

This is an uncharacterized protein from Human herpesvirus 6B (strain Z29) (HHV-6 variant B).